The sequence spans 286 residues: Light-independent protochlorophyllide reductase iron-sulfur ATP-binding protein (286 aa).

Residues 10–15 (GIGKST) and K39 each bind ATP. S14 serves as a coordination point for Mg(2+). Residues C95 and C129 each contribute to the [4Fe-4S] cluster site. Position 180-181 (180-181 (NR)) interacts with ATP.

The protein belongs to the NifH/BchL/ChlL family. In terms of assembly, homodimer. Protochlorophyllide reductase is composed of three subunits; ChlL, ChlN and ChlB. It depends on [4Fe-4S] cluster as a cofactor.

The catalysed reaction is chlorophyllide a + oxidized 2[4Fe-4S]-[ferredoxin] + 2 ADP + 2 phosphate = protochlorophyllide a + reduced 2[4Fe-4S]-[ferredoxin] + 2 ATP + 2 H2O. Its pathway is porphyrin-containing compound metabolism; chlorophyll biosynthesis (light-independent). Its function is as follows. Component of the dark-operative protochlorophyllide reductase (DPOR) that uses Mg-ATP and reduced ferredoxin to reduce ring D of protochlorophyllide (Pchlide) to form chlorophyllide a (Chlide). This reaction is light-independent. The L component serves as a unique electron donor to the NB-component of the complex, and binds Mg-ATP. The polypeptide is Light-independent protochlorophyllide reductase iron-sulfur ATP-binding protein (Synechococcus elongatus (strain ATCC 33912 / PCC 7942 / FACHB-805) (Anacystis nidulans R2)).